We begin with the raw amino-acid sequence, 232 residues long: Large ribosomal subunit protein uL1 (232 aa).

Belongs to the universal ribosomal protein uL1 family. Part of the 50S ribosomal subunit.

Binds directly to 23S rRNA. The L1 stalk is quite mobile in the ribosome, and is involved in E site tRNA release. Functionally, protein L1 is also a translational repressor protein, it controls the translation of the L11 operon by binding to its mRNA. The protein is Large ribosomal subunit protein uL1 of Thermosipho africanus (strain TCF52B).